The following is a 67-amino-acid chain: PGPDVKCVCCQDGKECPCKGGECCITGSCCKEGDGLCCGKCSNAACKCADGCKCGSGCSCTLGNCTC.

This sequence belongs to the metallothionein superfamily. Type 4 family.

Metallothioneins have a high content of cysteine residues that bind various heavy metals. The chain is Metallothionein-A from Sphaerechinus granularis (Purple sea urchin).